The primary structure comprises 230 residues: MKRLILPFLSVGLLLGTTAHAATPLKTEQDKLSYSMGVMTGKAFRKHDIKIDPQTFSMGLSDAYLGKETQMTEAEMRQTLQQFEKQSLQKMQHKMKQTAQQNAEKSRAFLTANKNKPGVKTLANGLQYKVLQAGQGQSPTLNDEVTVNYEGRLINGTVFDSSYKRGQPATFPLKSVIKGWQEALTRMKPGAIWEIYVPPQLAYGEQGAPGVIGPNEALIFKVNLISVKKK.

The first 21 residues, 1–21, serve as a signal peptide directing secretion; the sequence is MKRLILPFLSVGLLLGTTAHA. Positions 142 to 230 constitute a PPIase FKBP-type domain; sequence NDEVTVNYEG…KVNLISVKKK (89 aa).

It belongs to the FKBP-type PPIase family.

The protein resides in the secreted. The catalysed reaction is [protein]-peptidylproline (omega=180) = [protein]-peptidylproline (omega=0). Its function is as follows. May be an essential virulence factor associated with macrophage infectivity. Exhibits PPIase activity. This Coxiella burnetii (strain RSA 493 / Nine Mile phase I) protein is Peptidyl-prolyl cis-trans isomerase Mip (mip).